The chain runs to 590 residues: G protein-coupled receptor kinase 5 (590 aa).

The segment at 1–185 (MELENIVANT…LERQPVTKNT (185 aa)) is N-terminal. The segment at 20–39 (GGKRKGKSKKWKEILKFPHI) is interaction with calmodulin. The region spanning 53 to 171 (YCSLCDKQPI…LDSMFFDRFL (119 aa)) is the RGS domain. The Protein kinase domain maps to 186–448 (FRQYRVLGKG…AAEVKRHPFF (263 aa)). ATP is bound by residues 192–200 (LGKGGFGEV) and Lys215. Asp311 serves as the catalytic Proton acceptor. The short motif at 388–395 (RKEKVKRE) is the Nuclear localization signal element. Residues 449–514 (RNMNFKRLEA…GSVSIPWQNE (66 aa)) enclose the AGC-kinase C-terminal domain. At Ser484 the chain carries Phosphoserine; by autocatalysis. A Phosphothreonine; by autocatalysis modification is found at Thr485. Residues 531-590 (GTLPPDLNRNHPPEPPKKGLLQRLFKRQHQNNSKSSPSSKTSFNHHINSNHVSSNSTGSS) form a disordered region. Residues 538–547 (NRNHPPEPPK) show a composition bias toward basic and acidic residues. Residues 546–565 (PKKGLLQRLFKRQHQNNSKS) form a sufficient for membrane localization region. A compositionally biased stretch (low complexity) spans 563–590 (SKSSPSSKTSFNHHINSNHVSSNSTGSS). Ser579 carries the phosphoserine modification.

Belongs to the protein kinase superfamily. AGC Ser/Thr protein kinase family. GPRK subfamily. In terms of assembly, interacts with ST13 (via the C-terminus 303-319 AA). Interacts with TP53/p53. Interacts with HTR4 (via C-terminus 330-346 AA); this interaction is promoted by 5-HT (serotonin). Interacts with HDAC5. Interacts with GIT1. In terms of processing, autophosphorylated. Autophosphorylation may play a critical role in the regulation of GRK5 kinase activity. Highest levels in heart, placenta, lung &gt; skeletal muscle &gt; brain, liver, pancreas &gt; kidney.

It localises to the cytoplasm. The protein resides in the nucleus. The protein localises to the cell membrane. The catalysed reaction is [G-protein-coupled receptor] + ATP = [G-protein-coupled receptor]-phosphate + ADP + H(+). With respect to regulation, inhibited by calmodulin with an IC(50) of 50 nM. Calmodulin inhibits GRK5 association with receptor and phospholipid. In terms of biological role, serine/threonine kinase that phosphorylates preferentially the activated forms of a variety of G-protein-coupled receptors (GPCRs). Such receptor phosphorylation initiates beta-arrestin-mediated receptor desensitization, internalization, and signaling events leading to their down-regulation. Phosphorylates a variety of GPCRs, including adrenergic receptors, muscarinic acetylcholine receptors (more specifically Gi-coupled M2/M4 subtypes), dopamine receptors and opioid receptors. In addition to GPCRs, also phosphorylates various substrates: Hsc70-interacting protein/ST13, TP53/p53, HDAC5, and arrestin-1/ARRB1. Phosphorylation of ARRB1 by GRK5 inhibits G-protein independent MAPK1/MAPK3 signaling downstream of 5HT4-receptors. Phosphorylation of HDAC5, a repressor of myocyte enhancer factor 2 (MEF2) leading to nuclear export of HDAC5 and allowing MEF2-mediated transcription. Phosphorylation of TP53/p53, a crucial tumor suppressor, inhibits TP53/p53-mediated apoptosis. Phosphorylation of ST13 regulates internalization of the chemokine receptor. Phosphorylates rhodopsin (RHO) (in vitro) and a non G-protein-coupled receptor, LRP6 during Wnt signaling (in vitro). This Homo sapiens (Human) protein is G protein-coupled receptor kinase 5 (GRK5).